A 707-amino-acid polypeptide reads, in one-letter code: Vicilin-like seed storage protein At2g18540 (707 aa).

Residues 1 to 24 (MSRFRILPLSIFLCFVSLFFCTES) form the signal peptide. The Cupin type-1 1 domain maps to 42 to 185 (PLLVKKDQRT…AFAVPEDILR (144 aa)). N60, N203, N285, N356, N396, and N399 each carry an N-linked (GlcNAc...) asparagine glycan. A Cupin type-1 2 domain is found at 247–403 (FNVFEEDPDF…SFNLSNETIK (157 aa)). Residues 439-696 (EEEEIERRRK…KKEEEEEKRR (258 aa)) show a composition bias toward basic and acidic residues. The interval 439-707 (EEEEIERRRK…PPQPKPPEEI (269 aa)) is disordered. The segment covering 698 to 707 (PPQPKPPEEI) has biased composition (pro residues).

Belongs to the 7S seed storage protein family.

Functionally, seed storage protein. The chain is Vicilin-like seed storage protein At2g18540 from Arabidopsis thaliana (Mouse-ear cress).